We begin with the raw amino-acid sequence, 85 residues long: uncharacterized protein (85 aa).

2 helical membrane passes run 20–42 (IYWF…TTFL) and 52–69 (IILR…KHYY).

The protein resides in the membrane. This is an uncharacterized protein from Saccharomyces cerevisiae (strain ATCC 204508 / S288c) (Baker's yeast).